Here is a 536-residue protein sequence, read N- to C-terminus: Pre-mRNA-splicing regulator female-lethal(2)D (536 aa).

Residues 1–91 are disordered; the sequence is MSVAAMTMDD…LQQQQQQQQQ (91 aa). The span at 28 to 39 shows a compositional bias: low complexity; that stretch reads QNLNILNSSQNS. Residues 57–69 are compositionally biased toward basic residues; it reads HHHHHPHPHHHHH. Residues 72–91 show a composition bias toward low complexity; sequence QQQQQQQQQHLQQQQQQQQQ. A coiled-coil region spans residues 254 to 319; sequence KSFSEEVKKS…KQAIKDEVVA (66 aa). Residues 424 to 450 form a disordered region; the sequence is APRTLPPKKSKLRGITTRRNSQLEEDH.

This sequence belongs to the fl(2)d family. As to quaternary structure, component of the WMM complex, a N6-methyltransferase complex composed of a catalytic subcomplex, named MAC, and of an associated subcomplex, named MACOM. The MAC subcomplex is composed of Ime4/Mettl3 and Mettl14. The MACOM subcomplex is composed of fl(2)d, Flacc/Xio, Hakai, vir, and, in some cases of nito. Interacts with vir and msk. Part of a complex containing fl(2)d, Sxl and vir.

It localises to the nucleus. Associated component of the WMM complex, a complex that mediates N6-methyladenosine (m6A) methylation of mRNAs, a modification that plays a role in the efficiency of mRNA splicing and is required for sex determination. Required for sex determination and dosage compensation via Sxl alternative splicing: m6A methylation acts as a key regulator of Sxl pre-mRNA and promotes female-specific alternative splicing of Sxl, which determines female physiognomy. M6A methylation is also required for neuronal functions. Required for proper inclusion of regulated exons in Ubx transcripts, leading to isoforms Ia/b and IIa/b. In Drosophila melanogaster (Fruit fly), this protein is Pre-mRNA-splicing regulator female-lethal(2)D.